The following is a 178-amino-acid chain: Protein SPEAR1 (178 aa).

Disordered stretches follow at residues 1–48 (MGST…QRGL) and 139–178 (HFLN…RLSL). Low complexity predominate over residues 14-28 (SSPPSSSPTSSSSSP). Positions 46–54 (RGLGVAQLE) match the SPL motif. Residues 144–167 (DPSSTTRRSKSLGSGIQHSGSSEN) show a composition bias toward polar residues. Positions 170-176 (VDLELRL) match the EAR motif.

Interacts with SPL and SPEAR2. In terms of tissue distribution, not detected in leaves.

Functionally, adapter-like transcriptional repressor recruiting TPL/TPR corepressors to inhibit TCP transcription factors. The sequence is that of Protein SPEAR1 from Arabidopsis thaliana (Mouse-ear cress).